The following is a 377-amino-acid chain: uncharacterized protein (377 aa).

A helical membrane pass occupies residues 21-43 (YFISFSALFLIAYMFVAAVPLGA).

It localises to the membrane. This is an uncharacterized protein from Treponema pallidum (strain Nichols).